The sequence spans 300 residues: uncharacterized protein (300 aa).

This is an uncharacterized protein from Methanocaldococcus jannaschii (strain ATCC 43067 / DSM 2661 / JAL-1 / JCM 10045 / NBRC 100440) (Methanococcus jannaschii).